The primary structure comprises 568 residues: Envelope glycoprotein E (568 aa).

The first 20 residues, 1–20 (MMPATLAGLALAVTVATMFA), serve as a signal peptide directing secretion. Residues 21–422 (QRVDSTTIHH…GGGPGNSKRR (402 aa)) lie on the Virion surface side of the membrane. N-linked (GlcNAc...) asparagine; by host glycosylation is found at Asn88, Asn179, and Asn248. Cys271 and Cys280 are disulfide-bonded. The helical transmembrane segment at 423–443 (AAVLGAAVWIALTLLILGGLG) threads the bilayer. Residues 444–568 (AYVAVNKKCL…ANKTFPSQRY (125 aa)) lie on the Intravirion side of the membrane. Positions 465–468 (KPTL) match the Internalization motif motif. Positions 470-534 (THAHTYTSLP…SRRNSFGPTL (65 aa)) are disordered. The interval 482–497 (GDLSLEQDAEDEDEDE) is acidic. Residues 486–500 (LEQDAEDEDEDEEEL) show a composition bias toward acidic residues. Residues 515–526 (KSSRSPSRRSSR) are compositionally biased toward basic residues.

It belongs to the alphaherpesvirinae glycoprotein E family. In terms of assembly, interacts with gI. Post-translationally, phosphorylated on serines within the acidic cluster. Phosphorylation determines whether endocytosed viral gE traffics to the trans-Golgi network or recycles to the cell membrane.

The protein resides in the virion membrane. The protein localises to the host cell membrane. Its subcellular location is the host cell junction. It localises to the host Golgi apparatus membrane. It is found in the host endosome membrane. In epithelial cells, the heterodimer gE/gI is required for the cell-to-cell spread of the virus, by sorting nascent virions to cell junctions. Once the virus reaches the cell junctions, virus particles can spread to adjacent cells extremely rapidly through interactions with cellular receptors that accumulate at these junctions. Implicated in basolateral spread in polarized cells. In neuronal cells, gE/gI is essential for the anterograde spread of the infection throughout the host nervous system. Together with US9, the heterodimer gE/gI is involved in the sorting and transport of viral structural components toward axon tips. The sequence is that of Envelope glycoprotein E (US8) from Psittacid herpesvirus 1 (isolate Amazon parrot/-/97-0001/1997) (PsHV-1).